Consider the following 152-residue polypeptide: Ribosome maturation factor RimP (152 aa).

This sequence belongs to the RimP family.

Its subcellular location is the cytoplasm. Its function is as follows. Required for maturation of 30S ribosomal subunits. In Elusimicrobium minutum (strain Pei191), this protein is Ribosome maturation factor RimP.